The chain runs to 201 residues: GTP cyclohydrolase 1 (201 aa).

3 residues coordinate Zn(2+): Cys90, His93, and Cys163.

This sequence belongs to the GTP cyclohydrolase I family. Toroid-shaped homodecamer, composed of two pentamers of five dimers.

It catalyses the reaction GTP + H2O = 7,8-dihydroneopterin 3'-triphosphate + formate + H(+). The protein operates within cofactor biosynthesis; 7,8-dihydroneopterin triphosphate biosynthesis; 7,8-dihydroneopterin triphosphate from GTP: step 1/1. The sequence is that of GTP cyclohydrolase 1 from Streptomyces avermitilis (strain ATCC 31267 / DSM 46492 / JCM 5070 / NBRC 14893 / NCIMB 12804 / NRRL 8165 / MA-4680).